The following is a 986-amino-acid chain: Bifunctional glutamine synthetase adenylyltransferase/adenylyl-removing enzyme (986 aa).

Positions 1–473 (MTSSAPGNAD…HYARLFEGDP (473 aa)) are adenylyl removase. The tract at residues 478–986 (SLPPVNYGAG…RRVFTALLER (509 aa)) is adenylyl transferase.

This sequence belongs to the GlnE family. It depends on Mg(2+) as a cofactor.

The catalysed reaction is [glutamine synthetase]-O(4)-(5'-adenylyl)-L-tyrosine + phosphate = [glutamine synthetase]-L-tyrosine + ADP. The enzyme catalyses [glutamine synthetase]-L-tyrosine + ATP = [glutamine synthetase]-O(4)-(5'-adenylyl)-L-tyrosine + diphosphate. Its function is as follows. Involved in the regulation of glutamine synthetase GlnA, a key enzyme in the process to assimilate ammonia. When cellular nitrogen levels are high, the C-terminal adenylyl transferase (AT) inactivates GlnA by covalent transfer of an adenylyl group from ATP to specific tyrosine residue of GlnA, thus reducing its activity. Conversely, when nitrogen levels are low, the N-terminal adenylyl removase (AR) activates GlnA by removing the adenylyl group by phosphorolysis, increasing its activity. The regulatory region of GlnE binds the signal transduction protein PII (GlnB) which indicates the nitrogen status of the cell. This Bradyrhizobium sp. (strain ORS 278) protein is Bifunctional glutamine synthetase adenylyltransferase/adenylyl-removing enzyme.